The chain runs to 351 residues: Dihydroorotate dehydrogenase (quinone) (351 aa).

Residues 61 to 65 (AGLDK) and Thr-85 contribute to the FMN site. Lys-65 lines the substrate pocket. 110–114 (NRMGF) contacts substrate. FMN contacts are provided by Asn-139 and Asn-172. Residue Asn-172 coordinates substrate. The active-site Nucleophile is the Ser-175. Asn-177 serves as a coordination point for substrate. The FMN site is built by Lys-217 and Thr-245. 246–247 (NT) contacts substrate. Residues Gly-268, Gly-297, and 318-319 (YT) contribute to the FMN site.

Belongs to the dihydroorotate dehydrogenase family. Type 2 subfamily. As to quaternary structure, monomer. Requires FMN as cofactor.

It localises to the cell membrane. It carries out the reaction (S)-dihydroorotate + a quinone = orotate + a quinol. The protein operates within pyrimidine metabolism; UMP biosynthesis via de novo pathway; orotate from (S)-dihydroorotate (quinone route): step 1/1. Catalyzes the conversion of dihydroorotate to orotate with quinone as electron acceptor. In Xylella fastidiosa (strain M23), this protein is Dihydroorotate dehydrogenase (quinone).